Reading from the N-terminus, the 839-residue chain is Heat shock 70 kDa protein 4L (839 aa).

Residues S74 and S508 each carry the phosphoserine modification. The segment covering 503-554 has biased composition (basic and acidic residues); that stretch reads LEGDHSDAPMETETSFKNENKDNMDKMQVDQEEGHQKCHAEHTPEEEIDHTG. The segment at 503–567 is disordered; the sequence is LEGDHSDAPM…KSAVSDKQDR (65 aa). Position 545 is a phosphothreonine (T545). S579 carries the phosphoserine modification. Position 761 is a phosphothreonine (T761). The segment at 786–839 is disordered; sequence IYKPKPKAEVPEDKPKANSEHNGPMDGQSGTETKSDSTKDSSQHTKSSGEMEVD. Basic and acidic residues-rich tracts occupy residues 791–804 and 818–839; these read PKAE…KANS and TKSD…MEVD.

Belongs to the heat shock protein 70 family. Homodimer.

The protein localises to the cytoplasm. It is found in the nucleus. Functionally, possesses chaperone activity in vitro where it inhibits aggregation of citrate synthase. The protein is Heat shock 70 kDa protein 4L (HSPA4L) of Homo sapiens (Human).